Reading from the N-terminus, the 251-residue chain is Phosphate import ATP-binding protein PstB (251 aa).

Residues 5-246 (IKIRGVNFFY…PKDKRTEDYI (242 aa)) enclose the ABC transporter domain. 37 to 44 (GPSGCGKS) serves as a coordination point for ATP.

This sequence belongs to the ABC transporter superfamily. Phosphate importer (TC 3.A.1.7) family. As to quaternary structure, the complex is composed of two ATP-binding proteins (PstB), two transmembrane proteins (PstC and PstA) and a solute-binding protein (PstS).

The protein localises to the cell membrane. It carries out the reaction phosphate(out) + ATP + H2O = ADP + 2 phosphate(in) + H(+). In terms of biological role, part of the ABC transporter complex PstSACB involved in phosphate import. Responsible for energy coupling to the transport system. In Dehalococcoides mccartyi (strain ATCC BAA-2266 / KCTC 15142 / 195) (Dehalococcoides ethenogenes (strain 195)), this protein is Phosphate import ATP-binding protein PstB.